We begin with the raw amino-acid sequence, 308 residues long: uncharacterized protein (308 aa).

Residues 158–221 (GDSNAETFEE…DSINHGESSE (64 aa)) form a disordered region. The segment covering 206 to 221 (RNGDRSDSINHGESSE) has biased composition (basic and acidic residues).

This is an uncharacterized protein from Arabidopsis thaliana (Mouse-ear cress).